We begin with the raw amino-acid sequence, 100 residues long: Carboxysome shell vertex protein CcmL (100 aa).

Positions 1 to 83 (MQLAKVLGTV…LDAMVVGIID (83 aa)) constitute a BMV domain.

This sequence belongs to the CcmL/EutN family. CcmL subfamily. In terms of assembly, homopentamer. Interacts with full-length CcmM.

It localises to the carboxysome. In terms of biological role, probably forms vertices in the carboxysome, a polyhedral inclusion where RuBisCO (ribulose bisphosphate carboxylase, rbcL-rbcS) is sequestered. Has been modeled to induce curvature upon insertion into an otherwise flat hexagonal molecular layer of CcmK subunits. This Synechocystis sp. (strain ATCC 27184 / PCC 6803 / Kazusa) protein is Carboxysome shell vertex protein CcmL.